The following is a 684-amino-acid chain: DNA-directed RNA polymerase subunit beta' (684 aa).

Zn(2+) is bound by residues Cys69, Cys71, Cys87, and Cys90. Mg(2+)-binding residues include Asp491, Asp493, and Asp495.

It belongs to the RNA polymerase beta' chain family. RpoC1 subfamily. As to quaternary structure, in plastids the minimal PEP RNA polymerase catalytic core is composed of four subunits: alpha, beta, beta', and beta''. When a (nuclear-encoded) sigma factor is associated with the core the holoenzyme is formed, which can initiate transcription. Requires Mg(2+) as cofactor. Zn(2+) is required as a cofactor.

The protein localises to the plastid. Its subcellular location is the chloroplast. The enzyme catalyses RNA(n) + a ribonucleoside 5'-triphosphate = RNA(n+1) + diphosphate. DNA-dependent RNA polymerase catalyzes the transcription of DNA into RNA using the four ribonucleoside triphosphates as substrates. This Phaseolus vulgaris (Kidney bean) protein is DNA-directed RNA polymerase subunit beta'.